Reading from the N-terminus, the 67-residue chain is UPF0253 protein VS_2370 (67 aa).

Belongs to the UPF0253 family.

The polypeptide is UPF0253 protein VS_2370 (Vibrio atlanticus (strain LGP32) (Vibrio splendidus (strain Mel32))).